A 379-amino-acid chain; its full sequence is UDP-N-acetylglucosamine--N-acetylmuramyl-(pentapeptide) pyrophosphoryl-undecaprenol N-acetylglucosamine transferase (379 aa).

UDP-N-acetyl-alpha-D-glucosamine-binding positions include 19 to 21 (TGG), asparagine 133, arginine 174, serine 207, isoleucine 261, and glutamine 306.

The protein belongs to the glycosyltransferase 28 family. MurG subfamily.

Its subcellular location is the cell inner membrane. The catalysed reaction is di-trans,octa-cis-undecaprenyl diphospho-N-acetyl-alpha-D-muramoyl-L-alanyl-D-glutamyl-meso-2,6-diaminopimeloyl-D-alanyl-D-alanine + UDP-N-acetyl-alpha-D-glucosamine = di-trans,octa-cis-undecaprenyl diphospho-[N-acetyl-alpha-D-glucosaminyl-(1-&gt;4)]-N-acetyl-alpha-D-muramoyl-L-alanyl-D-glutamyl-meso-2,6-diaminopimeloyl-D-alanyl-D-alanine + UDP + H(+). It participates in cell wall biogenesis; peptidoglycan biosynthesis. Functionally, cell wall formation. Catalyzes the transfer of a GlcNAc subunit on undecaprenyl-pyrophosphoryl-MurNAc-pentapeptide (lipid intermediate I) to form undecaprenyl-pyrophosphoryl-MurNAc-(pentapeptide)GlcNAc (lipid intermediate II). The chain is UDP-N-acetylglucosamine--N-acetylmuramyl-(pentapeptide) pyrophosphoryl-undecaprenol N-acetylglucosamine transferase from Porphyromonas gingivalis (strain ATCC 33277 / DSM 20709 / CIP 103683 / JCM 12257 / NCTC 11834 / 2561).